Here is a 247-residue protein sequence, read N- to C-terminus: Anionic trypsin (247 aa).

The N-terminal stretch at 1-15 (MHPLLILAFVGAAVA) is a signal peptide. Residues 16–23 (FPSDDDDK) constitute a propeptide, activation peptide. The 221-residue stretch at 24–244 (IVGGYTCAEN…YVDWIQETIA (221 aa)) folds into the Peptidase S1 domain. Cystine bridges form between Cys-30/Cys-160, Cys-48/Cys-64, Cys-132/Cys-233, Cys-139/Cys-206, Cys-171/Cys-185, and Cys-196/Cys-220. The active-site Charge relay system is the His-63. Positions 75, 77, 80, and 85 each coordinate Ca(2+). Residue Asp-107 is the Charge relay system of the active site. Residue Ser-200 is the Charge relay system of the active site.

Belongs to the peptidase S1 family. Ca(2+) serves as cofactor. Post-translationally, not sulfated on tyrosine residue(s).

Its subcellular location is the secreted. It is found in the extracellular space. The catalysed reaction is Preferential cleavage: Arg-|-Xaa, Lys-|-Xaa.. The chain is Anionic trypsin from Bos taurus (Bovine).